A 265-amino-acid polypeptide reads, in one-letter code: tRNA pseudouridine synthase A (265 aa).

Aspartate 53 functions as the Nucleophile in the catalytic mechanism. Residue tyrosine 111 participates in substrate binding.

The protein belongs to the tRNA pseudouridine synthase TruA family. Homodimer.

The catalysed reaction is uridine(38/39/40) in tRNA = pseudouridine(38/39/40) in tRNA. Functionally, formation of pseudouridine at positions 38, 39 and 40 in the anticodon stem and loop of transfer RNAs. This Acinetobacter baumannii (strain SDF) protein is tRNA pseudouridine synthase A.